We begin with the raw amino-acid sequence, 399 residues long: DNA polymerase IV (399 aa).

The UmuC domain occupies I5–G187. Mg(2+)-binding residues include D9 and D105. E106 is an active-site residue.

This sequence belongs to the DNA polymerase type-Y family. As to quaternary structure, monomer. Requires Mg(2+) as cofactor.

The protein localises to the cytoplasm. The enzyme catalyses DNA(n) + a 2'-deoxyribonucleoside 5'-triphosphate = DNA(n+1) + diphosphate. Functionally, poorly processive, error-prone DNA polymerase involved in untargeted mutagenesis. Copies undamaged DNA at stalled replication forks, which arise in vivo from mismatched or misaligned primer ends. These misaligned primers can be extended by PolIV. Exhibits no 3'-5' exonuclease (proofreading) activity. May be involved in translesional synthesis, in conjunction with the beta clamp from PolIII. The chain is DNA polymerase IV from Acetivibrio thermocellus (strain ATCC 27405 / DSM 1237 / JCM 9322 / NBRC 103400 / NCIMB 10682 / NRRL B-4536 / VPI 7372) (Clostridium thermocellum).